A 284-amino-acid chain; its full sequence is Tropomyosin (284 aa).

A coiled-coil region spans residues 1–284 (MDAIKKKMQA…DQTFAEIAGY (284 aa)). A disordered region spans residues 103-133 (EEKLATTTEKLEEASKAADESERNRKVLEGR).

Belongs to the tropomyosin family. Homodimer.

Tropomyosin, in association with the troponin complex, plays a central role in the calcium dependent regulation of muscle contraction. The protein is Tropomyosin of Chlamys nipponensis akazara (Akazara scallop).